We begin with the raw amino-acid sequence, 298 residues long: Probable GTP 3',8-cyclase (298 aa).

Positions 4-227 (RYGREIRSFR…MQNRKKYLID (224 aa)) constitute a Radical SAM core domain. Residue Arg-13 participates in GTP binding. [4Fe-4S] cluster-binding residues include Cys-20 and Cys-24. Tyr-26 is an S-adenosyl-L-methionine binding site. Cys-27 contacts [4Fe-4S] cluster. Lys-61 contacts GTP. Gly-65 lines the S-adenosyl-L-methionine pocket. Thr-91 serves as a coordination point for GTP. Ser-115 contacts S-adenosyl-L-methionine. Lys-152 contributes to the GTP binding site. 2 residues coordinate [4Fe-4S] cluster: Cys-243 and Cys-246. 248–250 (RIR) serves as a coordination point for GTP. Residue Cys-260 coordinates [4Fe-4S] cluster.

This sequence belongs to the radical SAM superfamily. MoaA family. [4Fe-4S] cluster serves as cofactor.

The catalysed reaction is GTP + AH2 + S-adenosyl-L-methionine = (8S)-3',8-cyclo-7,8-dihydroguanosine 5'-triphosphate + 5'-deoxyadenosine + L-methionine + A + H(+). Its pathway is cofactor biosynthesis; molybdopterin biosynthesis. Catalyzes the cyclization of GTP to (8S)-3',8-cyclo-7,8-dihydroguanosine 5'-triphosphate. The polypeptide is Probable GTP 3',8-cyclase (Methanococcus maripaludis (strain C5 / ATCC BAA-1333)).